A 60-amino-acid polypeptide reads, in one-letter code: DNA-directed RNA polymerase subunit Rpo6 (60 aa).

The protein belongs to the archaeal Rpo6/eukaryotic RPB6 RNA polymerase subunit family. As to quaternary structure, part of the RNA polymerase complex.

Its subcellular location is the cytoplasm. The catalysed reaction is RNA(n) + a ribonucleoside 5'-triphosphate = RNA(n+1) + diphosphate. In terms of biological role, DNA-dependent RNA polymerase (RNAP) catalyzes the transcription of DNA into RNA using the four ribonucleoside triphosphates as substrates. This chain is DNA-directed RNA polymerase subunit Rpo6, found in Halobacterium salinarum (strain ATCC 700922 / JCM 11081 / NRC-1) (Halobacterium halobium).